A 447-amino-acid chain; its full sequence is Probable glycine dehydrogenase (decarboxylating) subunit 1 (447 aa).

Belongs to the GcvP family. N-terminal subunit subfamily. The glycine cleavage system is composed of four proteins: P, T, L and H. In this organism, the P 'protein' is a heterodimer of two subunits.

The catalysed reaction is N(6)-[(R)-lipoyl]-L-lysyl-[glycine-cleavage complex H protein] + glycine + H(+) = N(6)-[(R)-S(8)-aminomethyldihydrolipoyl]-L-lysyl-[glycine-cleavage complex H protein] + CO2. The glycine cleavage system catalyzes the degradation of glycine. The P protein binds the alpha-amino group of glycine through its pyridoxal phosphate cofactor; CO(2) is released and the remaining methylamine moiety is then transferred to the lipoamide cofactor of the H protein. This is Probable glycine dehydrogenase (decarboxylating) subunit 1 from Azorhizobium caulinodans (strain ATCC 43989 / DSM 5975 / JCM 20966 / LMG 6465 / NBRC 14845 / NCIMB 13405 / ORS 571).